A 457-amino-acid chain; its full sequence is Argininosuccinate lyase (457 aa).

Belongs to the lyase 1 family. Argininosuccinate lyase subfamily.

It is found in the cytoplasm. The enzyme catalyses 2-(N(omega)-L-arginino)succinate = fumarate + L-arginine. Its pathway is amino-acid biosynthesis; L-arginine biosynthesis; L-arginine from L-ornithine and carbamoyl phosphate: step 3/3. This is Argininosuccinate lyase from Sodalis glossinidius (strain morsitans).